A 338-amino-acid polypeptide reads, in one-letter code: Holliday junction branch migration complex subunit RuvB (338 aa).

Residues 1–14 (MENDHGILSDHPSG) show a composition bias toward basic and acidic residues. The disordered stretch occupies residues 1–21 (MENDHGILSDHPSGEEESQVE). Positions 3 to 185 (NDHGILSDHP…FGIVEHMNYY (183 aa)) are large ATPase domain (RuvB-L). ATP is bound by residues Leu24, Arg25, Gly66, Lys69, Thr70, Thr71, 132-134 (EDY), Arg175, Tyr185, and Arg222. Thr70 provides a ligand contact to Mg(2+). Positions 186–256 (TQDELTKIIF…IVKQALSLLQ (71 aa)) are small ATPAse domain (RuvB-S). The interval 259-338 (DRGLDEIDRK…LGIEYPTDKN (80 aa)) is head domain (RuvB-H). DNA-binding residues include Arg314 and Arg319.

Belongs to the RuvB family. In terms of assembly, homohexamer. Forms an RuvA(8)-RuvB(12)-Holliday junction (HJ) complex. HJ DNA is sandwiched between 2 RuvA tetramers; dsDNA enters through RuvA and exits via RuvB. An RuvB hexamer assembles on each DNA strand where it exits the tetramer. Each RuvB hexamer is contacted by two RuvA subunits (via domain III) on 2 adjacent RuvB subunits; this complex drives branch migration. In the full resolvosome a probable DNA-RuvA(4)-RuvB(12)-RuvC(2) complex forms which resolves the HJ.

The protein resides in the cytoplasm. It catalyses the reaction ATP + H2O = ADP + phosphate + H(+). Functionally, the RuvA-RuvB-RuvC complex processes Holliday junction (HJ) DNA during genetic recombination and DNA repair, while the RuvA-RuvB complex plays an important role in the rescue of blocked DNA replication forks via replication fork reversal (RFR). RuvA specifically binds to HJ cruciform DNA, conferring on it an open structure. The RuvB hexamer acts as an ATP-dependent pump, pulling dsDNA into and through the RuvAB complex. RuvB forms 2 homohexamers on either side of HJ DNA bound by 1 or 2 RuvA tetramers; 4 subunits per hexamer contact DNA at a time. Coordinated motions by a converter formed by DNA-disengaged RuvB subunits stimulates ATP hydrolysis and nucleotide exchange. Immobilization of the converter enables RuvB to convert the ATP-contained energy into a lever motion, pulling 2 nucleotides of DNA out of the RuvA tetramer per ATP hydrolyzed, thus driving DNA branch migration. The RuvB motors rotate together with the DNA substrate, which together with the progressing nucleotide cycle form the mechanistic basis for DNA recombination by continuous HJ branch migration. Branch migration allows RuvC to scan DNA until it finds its consensus sequence, where it cleaves and resolves cruciform DNA. The polypeptide is Holliday junction branch migration complex subunit RuvB (Limosilactobacillus reuteri (strain DSM 20016) (Lactobacillus reuteri)).